The chain runs to 434 residues: Acyl transferase 15 (434 aa).

Residues H164 and D371 each act as proton acceptor in the active site.

It belongs to the plant acyltransferase family.

Functionally, involved in the incorporation of ferulate into the cell wall. This Oryza sativa subsp. japonica (Rice) protein is Acyl transferase 15.